Reading from the N-terminus, the 409-residue chain is Bone morphogenetic protein 4 (409 aa).

The first 19 residues, 1 to 19 (MIPGNRMLMVVLLCQVLLG), serve as a signal peptide directing secretion. Positions 20 to 293 (GASHASLIPE…ALTRRRRAKR (274 aa)) are excised as a propeptide. Phosphoserine is present on Ser-91. The interval 91-110 (SGEEEEEEQMPSGGLEYPER) is disordered. Residues Asn-144, Asn-209, Asn-351, and Asn-366 are each glycosylated (N-linked (GlcNAc...) asparagine). 3 disulfides stabilise this stretch: Cys-309-Cys-374, Cys-338-Cys-406, and Cys-342-Cys-408.

This sequence belongs to the TGF-beta family. As to quaternary structure, homodimer; disulfide-linked. Interacts with GREM2. Part of a complex consisting of TWSG1 and CHRD. Interacts with the serine proteases, HTRA1 and HTRA3; the interaction with either inhibits BMP4-mediated signaling. The HTRA protease activity is required for this inhibition. Interacts with SOSTDC1. Interacts with FBN1 (via N-terminal domain) and FBN2. Interacts with type I receptor BMPR1A. Interacts with type II receptor BMPR2. Interacts with FSTL1; this interaction inhibits the activation of the BMP4/Smad1/5/8 signaling pathway. Interacts with SCUBE3. Interacts with TGFBR3.

Its subcellular location is the secreted. The protein localises to the extracellular space. It is found in the extracellular matrix. Functionally, growth factor of the TGF-beta superfamily that plays essential roles in many developmental processes, including neurogenesis, vascular development, angiogenesis and osteogenesis. Acts in concert with PTHLH/PTHRP to stimulate ductal outgrowth during embryonic mammary development and to inhibit hair follicle induction. Initiates the canonical BMP signaling cascade by associating with type I receptor BMPR1A and type II receptor BMPR2. Once all three components are bound together in a complex at the cell surface, BMPR2 phosphorylates and activates BMPR1A. In turn, BMPR1A propagates signal by phosphorylating SMAD1/5/8 that travel to the nucleus and act as activators and repressors of transcription of target genes. Positively regulates the expression of odontogenic development regulator MSX1 via inducing the IPO7-mediated import of SMAD1 to the nucleus. Required for MSX1-mediated mesenchymal molar tooth bud development beyond the bud stage, via promoting Wnt signaling. Acts as a positive regulator of odontoblast differentiation during mesenchymal tooth germ formation, expression is repressed during the bell stage by MSX1-mediated inhibition of CTNNB1 signaling. Able to induce its own expression in dental mesenchymal cells and also in the neighboring dental epithelial cells via an MSX1-mediated pathway. Can also signal through non-canonical BMP pathways such as ERK/MAP kinase, PI3K/Akt, or SRC cascades. For example, induces SRC phosphorylation which, in turn, activates VEGFR2, leading to an angiogenic response. The sequence is that of Bone morphogenetic protein 4 (BMP4) from Oryctolagus cuniculus (Rabbit).